The chain runs to 115 residues: NADH-ubiquinone oxidoreductase chain 3 (115 aa).

A run of 3 helical transmembrane segments spans residues 3-23 (LALA…ITFW), 55-75 (FFLV…LLPL), and 86-106 (LTIA…AYEW).

It belongs to the complex I subunit 3 family. As to quaternary structure, core subunit of respiratory chain NADH dehydrogenase (Complex I) which is composed of 45 different subunits. Interacts with TMEM186. Interacts with TMEM242.

It is found in the mitochondrion inner membrane. The enzyme catalyses a ubiquinone + NADH + 5 H(+)(in) = a ubiquinol + NAD(+) + 4 H(+)(out). In terms of biological role, core subunit of the mitochondrial membrane respiratory chain NADH dehydrogenase (Complex I) which catalyzes electron transfer from NADH through the respiratory chain, using ubiquinone as an electron acceptor. Essential for the catalytic activity of complex I. This is NADH-ubiquinone oxidoreductase chain 3 from Hylobates lar (Lar gibbon).